We begin with the raw amino-acid sequence, 1004 residues long: Sal-like protein 2 (1004 aa).

5 disordered regions span residues 1 to 33 (MSRR…EDHP), 51 to 122 (AHQN…EESS), 137 to 177 (GGGL…SGHL), 220 to 270 (PASP…EPPK), and 285 to 307 (PFSV…ALPG). Residues 34–56 (QVCAKCCAQFSDPTEFLAHQNSC) form a C2H2-type 1; atypical zinc finger. Residues 71–81 (NPSNSSASSAP) are compositionally biased toward low complexity. Positions 83-98 (PEGHSRSQVMDTEHSN) are enriched in basic and acidic residues. Low complexity predominate over residues 99–110 (PPDSGSSGAPDP). The segment covering 151–171 (PLPPESTPAPPPPPPPPPPPG) has biased composition (pro residues). Serine 243 is modified (phosphoserine). 5 C2H2-type zinc fingers span residues 372 to 394 (HKCR…LRSH), 400 to 422 (YKCN…FHRH), 629 to 651 (NQCV…YGQH), 657 to 679 (FKCK…FVGH), and 689 to 711 (NSCP…VRMH). The tract at residues 712–910 (LGGQIPNGGS…PGESSGRKAC (199 aa)) is disordered. Polar residues predominate over residues 731 to 742 (QENSSEQSTASG). Residues 756 to 779 (PEEEMSEEEEEDEEEEEDVTDEDS) show a composition bias toward acidic residues. Residues serine 794, serine 799, and serine 803 each carry the phosphoserine modification. The span at 800–809 (EEVSGAEEEV) shows a compositional bias: acidic residues. A compositionally biased stretch (low complexity) spans 810 to 819 (ATSVAAPTTV). The span at 820–829 (KEMDSNEKAP) shows a compositional bias: basic and acidic residues. Over residues 832 to 841 (TLPPPPPPPD) the composition is skewed to pro residues. Residues 896-910 (AMKKDPGESSGRKAC) show a composition bias toward basic and acidic residues. Lysine 908 participates in a covalent cross-link: Glycyl lysine isopeptide (Lys-Gly) (interchain with G-Cter in ubiquitin). C2H2-type zinc fingers lie at residues 908–930 (KACE…QKTH) and 937–961 (FTCV…LAHH).

The protein belongs to the sal C2H2-type zinc-finger protein family. As to expression, expressed throughout embryonic development. In adult predominantly in brain.

It is found in the nucleus. Functionally, probable transcription factor that plays a role in eye development before, during, and after optic fissure closure. This Mus musculus (Mouse) protein is Sal-like protein 2 (Sall2).